The following is a 1374-amino-acid chain: DNA-directed RNA polymerase subunit beta' (1374 aa).

Cys-71, Cys-73, Cys-86, and Cys-89 together coordinate Zn(2+). Positions 462, 464, and 466 each coordinate Mg(2+). Zn(2+) is bound by residues Cys-810, Cys-884, Cys-891, and Cys-894.

This sequence belongs to the RNA polymerase beta' chain family. As to quaternary structure, the RNAP catalytic core consists of 2 alpha, 1 beta, 1 beta' and 1 omega subunit. When a sigma factor is associated with the core the holoenzyme is formed, which can initiate transcription. Requires Mg(2+) as cofactor. Zn(2+) is required as a cofactor.

The enzyme catalyses RNA(n) + a ribonucleoside 5'-triphosphate = RNA(n+1) + diphosphate. In terms of biological role, DNA-dependent RNA polymerase catalyzes the transcription of DNA into RNA using the four ribonucleoside triphosphates as substrates. This chain is DNA-directed RNA polymerase subunit beta', found in Rickettsia massiliae (strain Mtu5).